Reading from the N-terminus, the 297-residue chain is Homoserine kinase (297 aa).

Position 82 to 92 (82 to 92 (PVSRGLGSSAA)) interacts with ATP.

The protein belongs to the GHMP kinase family. Homoserine kinase subfamily.

It is found in the cytoplasm. The enzyme catalyses L-homoserine + ATP = O-phospho-L-homoserine + ADP + H(+). It participates in amino-acid biosynthesis; L-threonine biosynthesis; L-threonine from L-aspartate: step 4/5. In terms of biological role, catalyzes the ATP-dependent phosphorylation of L-homoserine to L-homoserine phosphate. This is Homoserine kinase from Clostridium botulinum (strain 657 / Type Ba4).